The primary structure comprises 372 residues: uncharacterized protein (372 aa).

Residues 328-353 are disordered; sequence KKGQPCKDEDAVTVPLPSSDPGKETQ.

Its function is as follows. Induces the SOS system when expressed in E.coli, therefore, it may play a role in DNA metabolism and/or in genome stability. This is an uncharacterized protein from Saccharomyces cerevisiae (strain ATCC 204508 / S288c) (Baker's yeast).